We begin with the raw amino-acid sequence, 195 residues long: Insertion element IS136 uncharacterized protein Atu4601 (195 aa).

The 170-residue stretch at 25-194 folds into the Integrase catalytic domain; it reads MVMRSNLRWC…SPRQFIRAKS (170 aa).

This is Insertion element IS136 uncharacterized protein Atu4601 from Agrobacterium fabrum (strain C58 / ATCC 33970) (Agrobacterium tumefaciens (strain C58)).